We begin with the raw amino-acid sequence, 256 residues long: Small ribosomal subunit protein eS1 (256 aa).

Alanine 2 is subject to N-acetylalanine; partial.

The protein belongs to the eukaryotic ribosomal protein eS1 family. In terms of assembly, component of the small ribosomal subunit. Mature ribosomes consist of a small (40S) and a large (60S) subunit. The 40S subunit contains about 33 different proteins and 1 molecule of RNA (18S). The 60S subunit contains about 49 different proteins and 3 molecules of RNA (25S, 5.8S and 5S).

It is found in the cytoplasm. This chain is Small ribosomal subunit protein eS1, found in Candida albicans (strain SC5314 / ATCC MYA-2876) (Yeast).